The primary structure comprises 208 residues: DNA-binding protein HupB (208 aa).

The tract at residues 1 to 90 (MNKAELIDVL…PGAQFKAVIS (90 aa)) is bacterial histone-like domain. Residue Lys-3 is modified to N6-acetyllysine. Lys-3 carries the N6-acetyllysine; alternate; partial modification. Lys-3 carries the post-translational modification N6-methyllysine; alternate; partial. Lys-72 is subject to N6-acetyllysine; partial. Lys-86 is modified (N6-methyllysine; partial). Positions 92–208 (AQKLPADGPA…KKAPAKKGRR (117 aa)) are C-terminus, required for nucleoid localization. Lys-94 and Lys-103 each carry N6-acetyllysine; alternate; partial. N6-methyllysine; alternate; partial is present on residues Lys-94 and Lys-103. The segment at 96–208 (PADGPAVKRG…KKAPAKKGRR (113 aa)) is disordered. Positions 101 to 205 (AVKRGVTAGP…AAAKKAPAKK (105 aa)) are degenerate repeats region. Residues 113-208 (KAAKKAPAKK…KKAPAKKGRR (96 aa)) show a composition bias toward basic residues. Lys-116, Lys-136, Lys-149, and Lys-168 each carry N6-acetyllysine.

Belongs to the bacterial histone-like protein family. Long actinobacterial subfamily. In terms of assembly, may form oligomers. Interacts with RNase E (rne). In addition to the identifed modifications, is also methylated on one of Arg-53; Arg-54 or Arg-55.

It localises to the cytoplasm. Its subcellular location is the nucleoid. It is found in the secreted. The protein localises to the cell wall. The enzyme catalyses 4 Fe(2+) + O2 + 4 H(+) = 4 Fe(3+) + 2 H2O. Trans-stilbene derivative 4,4'-[(E)-ethene-1,2 diylbis({5[(phenylcarbonyl)amino]benzene-2,1-diyl}sulfonylimino)] dibenzoic acid (SD1) inhibits DNA binding at 50 uM. SD1 does not inhibit growth in a range of 3-1600 uM. In terms of biological role, a nucleoid-associated protein (NAP) that plays a crucial role in local chromosome architecture. Helps organize newly replicated oriC proximal regions and contributes to the timing of replication initiation and coordinating replication with chromosome segregation. There are between 30,000-60,000 molecules in a log phase cell; the protein-DNA complex is dynamic during the cell cycle, with more complexes near the cell ends. Binds irregularly along the chromosome with higher binding near the origin of replication (oriC) and lowest binding near the chromosome terminus (ter). Binds DNA non-sequence specifically via both its N- and C-terminal domains with high affinity, has no preference for linear or supercoiled DNA. Binds four-way junction DNA. Represses T7 RNA polymerase in vitro. The C-terminal domain enhances DNA end-joining in vitro in the presence of T4 DNA ligase. RNase E and HupB jointly contribute to cellular adaptation to changing growth conditions and survival during antibiotic treatment. Has ferroxidase activity, converts Fe(2+) into Fe(3+). Binds Fe(3+) but not Fe(2+); prevents the generation of hydroxyl radicals by the Fenton reaction and thus protects DNA from damage. May function in iron storage. Functionally, plays a role in epigenetic resistance to antibiotics. Growth on levels of isoniazid (INH) near the minimal inhibitory concentration (MIC) kills most bacteria. The surviving cells grow as either large or small colony variants (SCV), evidence suggest SCVs are associated with persistent infections. Mutating this protein leads to specific loss of SCVs. Its function is as follows. May play a role in cell wall assembly. The polypeptide is DNA-binding protein HupB (Mycolicibacterium smegmatis (strain ATCC 700084 / mc(2)155) (Mycobacterium smegmatis)).